A 419-amino-acid chain; its full sequence is Inositol-tetrakisphosphate 1-kinase (419 aa).

Lysine 18 contacts 1D-myo-inositol 1,3,4-trisphosphate. Residues arginine 106 and lysine 157 each coordinate ATP. Positions 117–325 (EAYMKDDRIC…IASVLQGQSS (209 aa)) constitute an ATP-grasp domain. Residues histidine 167 and lysine 199 each coordinate 1D-myo-inositol 1,3,4-trisphosphate. Residues 188–199 (QNFINHNAVLYK), serine 214, serine 232, and serine 236 contribute to the ATP site. Positions 281, 295, and 297 each coordinate Mg(2+). Asparagine 297 is a 1D-myo-inositol 1,3,4-trisphosphate binding site. Lysine 388 carries the N6-acetyllysine; by EP300 and CREBBP modification. Position 401 is a phosphoserine (serine 401). Lysine 415 carries the post-translational modification N6-acetyllysine; by EP300 and CREBBP.

Belongs to the ITPK1 family. Monomer. Interacts with GPS1/COPS1. Requires Mg(2+) as cofactor. Acetylation by EP300 and CREBBP destabilizes ITPK1, and down-regulates enzymatic activity. Deacetylated by SIRT1.

The enzyme catalyses 1D-myo-inositol 3,4,5,6-tetrakisphosphate + ATP = 1D-myo-inositol 1,3,4,5,6-pentakisphosphate + ADP + H(+). It catalyses the reaction 1D-myo-inositol 1,3,4-trisphosphate + ATP = 1D-myo-inositol 1,3,4,5-tetrakisphosphate + ADP + H(+). It carries out the reaction 1D-myo-inositol 1,3,4-trisphosphate + ATP = 1D-myo-inositol 1,3,4,6-tetrakisphosphate + ADP + H(+). The catalysed reaction is 1D-myo-inositol 3,4,6-trisphosphate + ATP = 1D-myo-inositol 1,3,4,6-tetrakisphosphate + ADP + H(+). The enzyme catalyses 1D-myo-inositol 1,3,4-trisphosphate + 1D-myo-inositol 1,3,4,5,6-pentakisphosphate = 1D-myo-inositol 3,4,5,6-tetrakisphosphate + 1D-myo-inositol 1,3,4,6-tetrakisphosphate. It catalyses the reaction 1D-myo-inositol 1,3,4-trisphosphate + 1D-myo-inositol 1,3,4,5,6-pentakisphosphate = 1D-myo-inositol 3,4,5,6-tetrakisphosphate + 1D-myo-inositol 1,3,4,5-tetrakisphosphate. In terms of biological role, kinase that can phosphorylate various inositol polyphosphate such as Ins(3,4,5,6)P4 or Ins(1,3,4)P3. Phosphorylates Ins(3,4,5,6)P4 at position 1 to form Ins(1,3,4,5,6)P5. This reaction is thought to have regulatory importance, since Ins(3,4,5,6)P4 is an inhibitor of plasma membrane Ca(2+)-activated Cl(-) channels, while Ins(1,3,4,5,6)P5 is not. Also phosphorylates Ins(1,3,4)P3 on O-5 and O-6 to form Ins(1,3,4,6)P4, an essential molecule in the hexakisphosphate (InsP6) pathway. Also acts as an inositol polyphosphate phosphatase that dephosphorylates Ins(1,3,4,5)P4 and Ins(1,3,4,6)P4 to Ins(1,3,4)P3, and Ins(1,3,4,5,6)P5 to Ins(3,4,5,6)P4. May also act as an isomerase that interconverts the inositol tetrakisphosphate isomers Ins(1,3,4,5)P4 and Ins(1,3,4,6)P4 in the presence of ADP and magnesium. Probably acts as the rate-limiting enzyme of the InsP6 pathway. Modifies TNF-alpha-induced apoptosis by interfering with the activation of TNFRSF1A-associated death domain. Plays an important role in MLKL-mediated necroptosis. Produces highly phosphorylated inositol phosphates such as inositolhexakisphosphate (InsP6) which bind to MLKL mediating the release of an N-terminal auto-inhibitory region leading to its activation. Essential for activated phospho-MLKL to oligomerize and localize to the cell membrane during necroptosis. This is Inositol-tetrakisphosphate 1-kinase (ITPK1) from Bos taurus (Bovine).